Reading from the N-terminus, the 231-residue chain is 7-cyano-7-deazaguanine synthase (231 aa).

8-18 (LSGGLDSATAA) is an ATP binding site. Residues Cys-189, Cys-197, Cys-200, and Cys-203 each contribute to the Zn(2+) site.

The protein belongs to the QueC family. It depends on Zn(2+) as a cofactor.

It catalyses the reaction 7-carboxy-7-deazaguanine + NH4(+) + ATP = 7-cyano-7-deazaguanine + ADP + phosphate + H2O + H(+). It participates in purine metabolism; 7-cyano-7-deazaguanine biosynthesis. In terms of biological role, catalyzes the ATP-dependent conversion of 7-carboxy-7-deazaguanine (CDG) to 7-cyano-7-deazaguanine (preQ(0)). The sequence is that of 7-cyano-7-deazaguanine synthase from Synechococcus elongatus (strain ATCC 33912 / PCC 7942 / FACHB-805) (Anacystis nidulans R2).